The sequence spans 190 residues: Peptidyl-tRNA hydrolase (190 aa).

Tyrosine 14 is a binding site for tRNA. Histidine 19 functions as the Proton acceptor in the catalytic mechanism. TRNA contacts are provided by tyrosine 64, asparagine 66, and asparagine 112.

The protein belongs to the PTH family. In terms of assembly, monomer.

The protein resides in the cytoplasm. The enzyme catalyses an N-acyl-L-alpha-aminoacyl-tRNA + H2O = an N-acyl-L-amino acid + a tRNA + H(+). Its function is as follows. Hydrolyzes ribosome-free peptidyl-tRNAs (with 1 or more amino acids incorporated), which drop off the ribosome during protein synthesis, or as a result of ribosome stalling. Functionally, catalyzes the release of premature peptidyl moieties from peptidyl-tRNA molecules trapped in stalled 50S ribosomal subunits, and thus maintains levels of free tRNAs and 50S ribosomes. The chain is Peptidyl-tRNA hydrolase from Chlorobaculum parvum (strain DSM 263 / NCIMB 8327) (Chlorobium vibrioforme subsp. thiosulfatophilum).